Consider the following 325-residue polypeptide: tRNA pseudouridine synthase B (325 aa).

Catalysis depends on Asp49, which acts as the Nucleophile.

This sequence belongs to the pseudouridine synthase TruB family. Type 1 subfamily.

It carries out the reaction uridine(55) in tRNA = pseudouridine(55) in tRNA. In terms of biological role, responsible for synthesis of pseudouridine from uracil-55 in the psi GC loop of transfer RNAs. The sequence is that of tRNA pseudouridine synthase B from Mesorhizobium japonicum (strain LMG 29417 / CECT 9101 / MAFF 303099) (Mesorhizobium loti (strain MAFF 303099)).